The following is a 365-amino-acid chain: MNLAAMDPLTYDVQLEAKRVKLKQLFTDFDTPELESFSSETAHYRMRAEFRMWHEGEDLYYYMFDKELNSKVRCDQFLPASELINKMMPVLVELLKPNTILRHRLFQIDFLSTLSGEILVSLLYHKQLDAEWEEQAKILKQTLSSQFNVNLIGRARKQKLIFDKDFVVESLNVAGKQLQYHQIENSFTQPNGKVSVKMLEWAIDVTKNSTGDLLELYCGNGNFSIALAQNFERVLATELAKPSVESAQYNIKMNHVDNLQIIRMSAEDFTDAMAKKRSYRRLEGIDLDSYNCNTIFVDPPRAGLDENTVKLVQGYERIVYISCNPNTLLDNLKELSKTHNITRFVLFDQFPYTDHMESGVFLEKK.

S-adenosyl-L-methionine-binding residues include Gln189, Tyr217, Asn222, Glu238, and Asp298. Cys323 serves as the catalytic Nucleophile. The active-site Proton acceptor is the Glu357.

Belongs to the class I-like SAM-binding methyltransferase superfamily. RNA M5U methyltransferase family. TrmA subfamily.

The enzyme catalyses uridine(54) in tRNA + S-adenosyl-L-methionine = 5-methyluridine(54) in tRNA + S-adenosyl-L-homocysteine + H(+). The catalysed reaction is uridine(341) in tmRNA + S-adenosyl-L-methionine = 5-methyluridine(341) in tmRNA + S-adenosyl-L-homocysteine + H(+). Functionally, dual-specificity methyltransferase that catalyzes the formation of 5-methyluridine at position 54 (m5U54) in all tRNAs, and that of position 341 (m5U341) in tmRNA (transfer-mRNA). This chain is tRNA/tmRNA (uracil-C(5))-methyltransferase, found in Shewanella piezotolerans (strain WP3 / JCM 13877).